Consider the following 121-residue polypeptide: Small ribosomal subunit protein uS13 (121 aa).

The segment at 99 to 121 (RGQRTRTNSRTRKGPRRKIMKKK) is disordered. Over residues 101 to 121 (QRTRTNSRTRKGPRRKIMKKK) the composition is skewed to basic residues.

It belongs to the universal ribosomal protein uS13 family. In terms of assembly, part of the 30S ribosomal subunit. Forms a loose heterodimer with protein S19. Forms two bridges to the 50S subunit in the 70S ribosome.

In terms of biological role, located at the top of the head of the 30S subunit, it contacts several helices of the 16S rRNA. In the 70S ribosome it contacts the 23S rRNA (bridge B1a) and protein L5 of the 50S subunit (bridge B1b), connecting the 2 subunits; these bridges are implicated in subunit movement. Contacts the tRNAs in the A and P-sites. The protein is Small ribosomal subunit protein uS13 of Thermodesulfovibrio yellowstonii (strain ATCC 51303 / DSM 11347 / YP87).